We begin with the raw amino-acid sequence, 106 residues long: 3-oxoacyl-[acyl-carrier-protein] reductase (106 aa).

It belongs to the short-chain dehydrogenases/reductases (SDR) family. In terms of assembly, homotetramer. As to expression, mesocarp.

It localises to the plastid. It is found in the chloroplast. The enzyme catalyses a (3R)-hydroxyacyl-[ACP] + NADP(+) = a 3-oxoacyl-[ACP] + NADPH + H(+). It participates in lipid metabolism; fatty acid biosynthesis. The sequence is that of 3-oxoacyl-[acyl-carrier-protein] reductase from Persea americana (Avocado).